A 204-amino-acid polypeptide reads, in one-letter code: Urease accessory protein UreG 1 (204 aa).

Residue Gly14 to Thr21 participates in GTP binding.

The protein belongs to the SIMIBI class G3E GTPase family. UreG subfamily. As to quaternary structure, homodimer. UreD, UreF and UreG form a complex that acts as a GTP-hydrolysis-dependent molecular chaperone, activating the urease apoprotein by helping to assemble the nickel containing metallocenter of UreC. The UreE protein probably delivers the nickel.

Its subcellular location is the cytoplasm. Its function is as follows. Facilitates the functional incorporation of the urease nickel metallocenter. This process requires GTP hydrolysis, probably effectuated by UreG. In Methylorubrum extorquens (strain PA1) (Methylobacterium extorquens), this protein is Urease accessory protein UreG 1.